The sequence spans 329 residues: Catabolite control protein A (329 aa).

One can recognise an HTH lacI-type domain in the interval 1-57 (MTVTIYDVAREARVSMATVSRVVNGNQNVKAETKNKVNEVIKRLNYRPNAVARGLAS). A DNA-binding region (H-T-H motif) is located at residues 5–24 (IYDVAREARVSMATVSRVVN).

Global transcriptional regulator of carbon catabolite repression (CCR) and carbon catabolite activation (CCA), which ensures optimal energy usage under diverse conditions. This Staphylococcus aureus (strain COL) protein is Catabolite control protein A (ccpA).